Consider the following 1467-residue polypeptide: Actin cytoskeleton-regulatory complex protein pan1 (1467 aa).

Residues 1-157 (MYSSSNSFLG…PPPKSSGSKI (157 aa)) are disordered. Positions 25-48 (QPPYSQLPQGQQQIPQQTGFQPQP) are enriched in low complexity. Residues 50–75 (GYGSQSASHLQPQPTGFPTGQLQPQF) are compositionally biased toward polar residues. Residues 77-101 (GFPGAAPPQQQQQFGGYQAPAQQPQ) are compositionally biased toward low complexity. A compositionally biased stretch (polar residues) spans 129–139 (RTSSEIANSFS). The 89-residue stretch at 169 to 257 (DQAKFEQLFK…DKIKNEVSGM (89 aa)) folds into the EH 1 domain. The 36-residue stretch at 201–236 (LPGSELSKIWVLSDTTKSGQLFFPEFALAMYLCNLR) folds into the EF-hand 1 domain. Residues 266-376 (PDTEPQGAAR…PQATGYNGPR (111 aa)) are disordered. The span at 292-301 (PPAPQHPKPQ) shows a compositional bias: pro residues. Composition is skewed to polar residues over residues 305 to 314 (NAQFLSQLAA) and 340 to 370 (LAPQ…PQAT). Residues 458–547 (EKKIYDDLFR…PELIPPSTRN (90 aa)) enclose the EH 2 domain. Positions 491 to 526 (LDRKDLERIWTLADPNNRGRLNMDEFAVAMHLIYRK) constitute an EF-hand 2 domain. Disordered regions lie at residues 613 to 643 (AGYR…EELS), 822 to 864 (RADR…HERR), 888 to 1087 (RTAH…ELLK), and 1101 to 1467 (EQVR…RVLD). Residues 634-758 (TSQASEEELS…LFRLKDAKAH (125 aa)) adopt a coiled-coil conformation. The segment covering 892–912 (IRKEEESRASAQEQRLRHEEP) has biased composition (basic and acidic residues). Residues 919–934 (LSPAPSAGSAGSLPGS) are compositionally biased toward low complexity. 5 stretches are compositionally biased toward basic and acidic residues: residues 935–953 (THED…RIAE), 973–1009 (RQER…EQRS), 1054–1087 (AARE…ELLK), 1101–1129 (EQVR…EKEA), and 1136–1153 (AEIE…LELE). Positions 965–1162 (DTSETLLQRQ…ERLDEESSSD (198 aa)) form a coiled coil. A compositionally biased stretch (acidic residues) spans 1154-1165 (RLDEESSSDDEG). Over residues 1171–1182 (PEDSTPTQSQLL) the composition is skewed to polar residues. The segment covering 1183–1197 (PTVTPAAPVSAPESE) has biased composition (low complexity). The segment covering 1279-1288 (LERKSRARPE) has biased composition (basic and acidic residues). Composition is skewed to pro residues over residues 1369-1381 (AAPP…PPAA) and 1389-1430 (VAPP…PTPA). A WH2 domain is found at 1434–1451 (DRSALLASIQKGKGLRKV).

It belongs to the PAN1 family. As to quaternary structure, component of the PAN1 actin cytoskeleton-regulatory complex.

It is found in the cell membrane. The protein localises to the endosome membrane. It localises to the cytoplasm. The protein resides in the cytoskeleton. Its subcellular location is the actin patch. Component of the PAN1 actin cytoskeleton-regulatory complex required for the internalization of endosomes during actin-coupled endocytosis. The complex links the site of endocytosis to the cell membrane-associated actin cytoskeleton. Mediates uptake of external molecules and vacuolar degradation of plasma membrane proteins. Plays a role in the proper organization of the cell membrane-associated actin cytoskeleton and promotes its destabilization. This Aspergillus fumigatus (strain CBS 144.89 / FGSC A1163 / CEA10) (Neosartorya fumigata) protein is Actin cytoskeleton-regulatory complex protein pan1 (pan1).